Reading from the N-terminus, the 508-residue chain is Photosystem II CP47 reaction center protein (508 aa).

Helical transmembrane passes span 21 to 36 (SVHIMHTALVSGWAGS), 101 to 115 (IVFSGLCFLAAIWHW), 140 to 156 (GIHLFLSGVACFGFGAF), 203 to 218 (IAAGTLGILAGLFHLS), 237 to 252 (VLSSSIAAVFFAAFVV), and 457 to 472 (SFALLFFFGHIWHGSR).

The protein belongs to the PsbB/PsbC family. PsbB subfamily. As to quaternary structure, PSII is composed of 1 copy each of membrane proteins PsbA, PsbB, PsbC, PsbD, PsbE, PsbF, PsbH, PsbI, PsbJ, PsbK, PsbL, PsbM, PsbT, PsbX, PsbY, PsbZ, Psb30/Ycf12, at least 3 peripheral proteins of the oxygen-evolving complex and a large number of cofactors. It forms dimeric complexes. Binds multiple chlorophylls. PSII binds additional chlorophylls, carotenoids and specific lipids. serves as cofactor.

It localises to the plastid. It is found in the chloroplast thylakoid membrane. Its function is as follows. One of the components of the core complex of photosystem II (PSII). It binds chlorophyll and helps catalyze the primary light-induced photochemical processes of PSII. PSII is a light-driven water:plastoquinone oxidoreductase, using light energy to abstract electrons from H(2)O, generating O(2) and a proton gradient subsequently used for ATP formation. This is Photosystem II CP47 reaction center protein from Lobularia maritima (Sweet alyssum).